The primary structure comprises 310 residues: Pirin-like protein At1g50590 (310 aa).

The protein belongs to the pirin family.

It localises to the nucleus. This is Pirin-like protein At1g50590 from Arabidopsis thaliana (Mouse-ear cress).